The sequence spans 222 residues: UPF0585 protein CG18661 (222 aa).

Belongs to the UPF0585 family.

This chain is UPF0585 protein CG18661, found in Drosophila melanogaster (Fruit fly).